Consider the following 349-residue polypeptide: Protein BPS1, chloroplastic (349 aa).

The N-terminal 43 residues, 1 to 43 (MARPQDPPRGFFPFGNPFKNLSSKNSVLSSKLLPLLNNFETNL), are a transit peptide targeting the chloroplast.

As to expression, expressed in roots, hypocotyls, cotyledons, leaves, flowers and siliques.

The protein localises to the plastid. The protein resides in the chloroplast. Its function is as follows. Required for normal root and shoot development. Prevents constitutive production of a root mobile carotenoid-derived signaling compound that is capable of arresting shoot and leaf development. In Arabidopsis thaliana (Mouse-ear cress), this protein is Protein BPS1, chloroplastic.